Reading from the N-terminus, the 368-residue chain is UV excision repair protein rhp23 (368 aa).

Residues 1–77 (MNLTFKNLQQ…IVCMVSRPKT (77 aa)) enclose the Ubiquitin-like domain. 2 stretches are compositionally biased toward low complexity: residues 76–88 (KTST…AASP) and 103–124 (APSS…AAPS). Residues 76–134 (KTSTSTPKSAASPAPNPPASVPEKKVEAPSSTVAESTSTTQTVAAAAPSNPDTTATSEA) form a disordered region. Residues Ser84 and Ser87 each carry the phosphoserine modification. 2 consecutive UBA domains span residues 135–185 (PIDA…LLTG) and 320–360 (QEES…LFEH). Ser364 is subject to Phosphoserine.

The protein localises to the nucleus. Involved in postreplication repair of UV-damaged DNA. Postreplication repair functions in gap-filling of a daughter strand on replication of damaged DNA. Its function is as follows. Protects ubiquitin chains against dissambly by deubiquitinating enzymes thereby promoting protein degradation. This Schizosaccharomyces pombe (strain 972 / ATCC 24843) (Fission yeast) protein is UV excision repair protein rhp23 (rhp23).